A 212-amino-acid chain; its full sequence is Ribonuclease HII (212 aa).

Residues 20–209 (TCVVGVDEVG…VHNILYQEAS (190 aa)) enclose the RNase H type-2 domain. The a divalent metal cation site is built by D26, E27, and D117.

This sequence belongs to the RNase HII family. The cofactor is Mn(2+). Requires Mg(2+) as cofactor.

The protein resides in the cytoplasm. It catalyses the reaction Endonucleolytic cleavage to 5'-phosphomonoester.. In terms of biological role, endonuclease that specifically degrades the RNA of RNA-DNA hybrids. This chain is Ribonuclease HII, found in Cereibacter sphaeroides (strain ATCC 17029 / ATH 2.4.9) (Rhodobacter sphaeroides).